A 246-amino-acid chain; its full sequence is FAD synthetase (246 aa).

Belongs to the RibF family.

It carries out the reaction FMN + ATP + H(+) = FAD + diphosphate. It participates in cofactor biosynthesis; FAD biosynthesis; FAD from FMN: step 1/1. In terms of biological role, catalyzes the adenylation of flavin mononucleotide (FMN) to form flavin adenine dinucleotide (FAD) coenzyme. Can also catalyze, with lower efficiency, the adenylation of the toxic riboflavin analogs 8-demethyl-8-aminoriboflavin mononucleotide (AFMN) and roseoflavin mononucleotide (RoFMN) to 8-demethyl-8-aminoriboflavin adenine dinucleotide (AFAD) and roseoflavin adenine dinucleotide (RoFAD), respectively. The protein is FAD synthetase of Listeria monocytogenes serovar 1/2a (strain ATCC BAA-679 / EGD-e).